The sequence spans 804 residues: Endoplasmin (804 aa).

An N-terminal signal peptide occupies residues 1-21 (MRALWVLGLCCVLLTFGSVRA). An SRT pseudosubstrate motif motif is present at residues 42 to 44 (SRT). A glycan (N-linked (GlcNAc...) asparagine) is linked at asparagine 62. Serine 64 bears the Phosphoserine mark. Asparagine 107 carries an N-linked (GlcNAc...) asparagine glycan. 3 residues coordinate ATP: asparagine 107, aspartate 149, and asparagine 162. Position 168 is an N6-(2-hydroxyisobutyryl)lysine (lysine 168). Serine 172 carries the post-translational modification Phosphoserine. Phenylalanine 199 is a binding site for ATP. Asparagine 217 carries N-linked (GlcNAc...) asparagine glycosylation. Residues 288–323 (TVEEPAEEEEAAKEDKEESDDEAAVEEEEDEKKPKT) are disordered. The span at 289–317 (VEEPAEEEEAAKEDKEESDDEAAVEEEED) shows a compositional bias: acidic residues. Phosphoserine is present on residues serine 306 and serine 403. Position 404 is an N6-succinyllysine (lysine 404). N-linked (GlcNAc...) asparagine glycosylation is present at asparagine 445. Serine 447 carries the phosphoserine modification. At lysine 479 the chain carries N6-acetyllysine. N-linked (GlcNAc...) asparagine glycosylation is found at asparagine 481 and asparagine 502. Lysine 633 is modified (N6-succinyllysine). The interval 750–804 (DPDAKVEEEPEEEPEETTEDTAEDTEQDEEEEMDAGTDEEEQETAEKSTAEKDEL) is disordered. Acidic residues predominate over residues 757–792 (EEPEEEPEETTEDTAEDTEQDEEEEMDAGTDEEEQE). The residue at position 786 (threonine 786) is a Phosphothreonine. Residues 793-804 (TAEKSTAEKDEL) show a composition bias toward basic and acidic residues. The Prevents secretion from ER signature appears at 801–804 (KDEL).

Belongs to the heat shock protein 90 family. Homodimer; disulfide-linked. Component of an EIF2 complex at least composed of CELF1/CUGBP1, CALR, CALR3, EIF2S1, EIF2S2, HSP90B1 and HSPA5. Part of a large chaperone multiprotein complex comprising DNAJB11, HSP90B1, HSPA5, HYOU, PDIA2, PDIA4, PDIA6, PPIB, SDF2L1, UGGT1 and very small amounts of ERP29, but not, or at very low levels, CALR nor CANX. Interacts with AIMP1; regulates its retention in the endoplasmic reticulum. Hyperglycosylated form interacts with OS9; promoting its degradation by the endoplasmic reticulum associated degradation (ERAD). Interacts with CNPY3. This interaction is disrupted in the presence of ATP. Interacts with TLR4 and TLR9, but not with TLR3. Interacts with MZB1 in a calcium-dependent manner. Interacts with METTL23. Interacts with IL1B; the interaction facilitates cargo translocation into the ERGIC. Interacts with EIF2AK3. In terms of processing, phosphorylated by CK2. Post-translationally, N-glycosylated cotranslationally at Asn-217 by STT3A-containing OST-A complex: this glycosylation is constitutive. In response to various stress, 5 additional facultative sites (Asn-62, Asn-107, Asn-445, Asn-481 and Asn-502) can be glycosylated post-translationally by STT3B-containing OST-B complex, leading to a hyperglycosylated form that is degraded by the ER-associated degradation (ERAD) pathway. In normal conditions, the OST-A complex together with CCDC134 prevent glycosylation at facultative sites during protein folding, thereby preventing hyperglycosylation. Mechanistically, nascent HSP90B1 is tethered during translation to a specialized CCDC134-containing translocon that forms a microenvironment for its folding, in which STT3A associates with the SRT pseudosubstrate motif, and prevents access to facultative glycosylation sites until folding is completed, rendering its facultative sites inaccessible to the OST-B complex.

It is found in the endoplasmic reticulum lumen. Its subcellular location is the sarcoplasmic reticulum lumen. The protein localises to the melanosome. It carries out the reaction ATP + H2O = ADP + phosphate + H(+). In terms of biological role, ATP-dependent chaperone involved in the processing of proteins in the endoplasmic reticulum, regulating their transport. Together with MESD, acts as a modulator of the Wnt pathway by promoting the folding of LRP6, a coreceptor of the canonical Wnt pathway. When associated with CNPY3, required for proper folding of Toll-like receptors. Promotes folding and trafficking of TLR4 to the cell surface. May participate in the unfolding of cytosolic leaderless cargos (lacking the secretion signal sequence) such as the interleukin 1/IL-1 to facilitate their translocation into the ERGIC (endoplasmic reticulum-Golgi intermediate compartment) and secretion; the translocation process is mediated by the cargo receptor TMED10. This chain is Endoplasmin (HSP90B1), found in Bos taurus (Bovine).